Reading from the N-terminus, the 384-residue chain is Actin-binding Rho-activating protein (384 aa).

Over residues 1–11 (MARGEKGRGEG) the composition is skewed to basic and acidic residues. Disordered stretches follow at residues 1–20 (MARGEKGRGEGPAKSALRKV), 32–159 (GWQQ…SPTR), and 181–211 (EQEELKCRSDSIDTEDSGYGGETEERPEQDG). Over residues 35–47 (QWANENSTRQAQE) the composition is skewed to polar residues. Positions 134-145 (DGDEPEPEQPES) are enriched in acidic residues. Phosphoserine occurs at positions 156 and 191. 2 actin-binding regions span residues 202 to 302 (ETEE…AERA) and 303 to 384 (KRAE…TLLK). Interaction with actin regions lie at residues 243 to 288 (SQVG…GDEG) and 355 to 384 (MRARKHGLVDFEGEMLWQGRDDHVVITLLK).

As to quaternary structure, binds F-actin and ABLIM1, ABLIM2 and ABLIM3. Interaction with ABLIM2 and ABLIM3 enhances activity. In terms of tissue distribution, specifically expressed in heart and skeletal muscles.

Its subcellular location is the cytoplasm. It is found in the myofibril. The protein localises to the sarcomere. The protein resides in the cytoskeleton. Acts as an activator of serum response factor (SRF)-dependent transcription possibly by inducing nuclear translocation of MKL1 or MKL2 and through a mechanism requiring Rho-actin signaling. The chain is Actin-binding Rho-activating protein (ABRA) from Sus scrofa (Pig).